A 155-amino-acid chain; its full sequence is Interleukin-2 (155 aa).

A signal peptide spans 1–20; that stretch reads MYSMQLASCVALTLVLLVNS. An O-linked (GalNAc...) threonine glycan is attached at Thr-23. Residues Cys-78 and Cys-126 are joined by a disulfide bond.

It belongs to the IL-2 family.

Its subcellular location is the secreted. Cytokine produced by activated CD4-positive helper T-cells and to a lesser extend activated CD8-positive T-cells and natural killer (NK) cells that plays pivotal roles in the immune response and tolerance. Binds to a receptor complex composed of either the high-affinity trimeric IL-2R (IL2RA/CD25, IL2RB/CD122 and IL2RG/CD132) or the low-affinity dimeric IL-2R (IL2RB and IL2RG). Interaction with the receptor leads to oligomerization and conformation changes in the IL-2R subunits resulting in downstream signaling starting with phosphorylation of JAK1 and JAK3. In turn, JAK1 and JAK3 phosphorylate the receptor to form a docking site leading to the phosphorylation of several substrates including STAT5. This process leads to activation of several pathways including STAT, phosphoinositide-3-kinase/PI3K and mitogen-activated protein kinase/MAPK pathways. Functions as a T-cell growth factor and can increase NK-cell cytolytic activity as well. Promotes strong proliferation of activated B-cells and subsequently immunoglobulin production. Plays a pivotal role in regulating the adaptive immune system by controlling the survival and proliferation of regulatory T-cells, which are required for the maintenance of immune tolerance. Moreover, participates in the differentiation and homeostasis of effector T-cell subsets, including Th1, Th2, Th17 as well as memory CD8-positive T-cells. The protein is Interleukin-2 (Il2) of Rattus norvegicus (Rat).